We begin with the raw amino-acid sequence, 624 residues long: Leucine-rich repeat, immunoglobulin-like domain and transmembrane domain-containing protein 1 (624 aa).

Positions 1–21 are cleaved as a signal peptide; the sequence is MWVALGMLWLLALGGPHQAWG. Residues 22–59 enclose the LRRNT domain; the sequence is FCPSECSCSLRILSDGSKARTVVCSDPDLTLPPASIPP. Topologically, residues 22 to 527 are lumenal; sequence FCPSECSCSL…EVVDAEGTQR (506 aa). 5 LRR repeats span residues 60 to 81, 84 to 105, 108 to 129, 132 to 153, and 156 to 177; these read DTCK…TFRP, RLEQ…MLRG, RLRE…ALRD, QLQL…AAHF, and NLTF…LLDV. Asn-156 is a glycosylation site (N-linked (GlcNAc...) asparagine). In terms of domain architecture, LRRCT spans 201–254; that stretch reads NPWVCDCRLYDLVHLLDGWVSSNLIFIEARLRCASPRSLAGVAFSQLELRKCQS. Residues 267–336 form the Ig-like C2-type domain; it reads PLGSTVLLRC…YICQAKNFLG (70 aa). Cys-276 and Cys-329 are joined by a disulfide. N-linked (GlcNAc...) asparagine glycosylation is found at Asn-297 and Asn-456. One can recognise a Fibronectin type-III domain in the interval 431–519; sequence MVRSLKVVGD…QCVIFSTDEV (89 aa). An LRR 6 repeat occupies 526–549; sequence QRLINMVVISVAAIIALPPTLLVC. A helical membrane pass occupies residues 528–548; that stretch reads LINMVVISVAAIIALPPTLLV. The Cytoplasmic portion of the chain corresponds to 549–624; it reads CCGALRRRCH…GGRRINEYFC (76 aa).

May form a homodimer. Interacts with LRIT2; may form a heterodimer with LRIT2. Interacts (via its N-terminal extracellular domain) with metabotropic glutamate receptor GRM6. Interacts (via its extreme C-terminus) with the scaffold protein FRMPD2 (via the third PDZ domain); the interaction leads to their colocalization in photoreceptor synapses. Expressed predominantly in developing photoreceptor and bipolar cells.

Its subcellular location is the endoplasmic reticulum membrane. It is found in the cell projection. The protein localises to the dendrite. Its function is as follows. Photoreceptor synaptic protein essential for normal vision. Involved in synapse formation in cone photoreceptor cells. This Mus musculus (Mouse) protein is Leucine-rich repeat, immunoglobulin-like domain and transmembrane domain-containing protein 1 (Lrit1).